A 259-amino-acid chain; its full sequence is Ribosomal RNA small subunit methyltransferase A (259 aa).

The S-adenosyl-L-methionine site is built by N15, L17, G41, E62, D86, and N105.

It belongs to the class I-like SAM-binding methyltransferase superfamily. rRNA adenine N(6)-methyltransferase family. RsmA subfamily.

Its subcellular location is the cytoplasm. It carries out the reaction adenosine(1518)/adenosine(1519) in 16S rRNA + 4 S-adenosyl-L-methionine = N(6)-dimethyladenosine(1518)/N(6)-dimethyladenosine(1519) in 16S rRNA + 4 S-adenosyl-L-homocysteine + 4 H(+). Its function is as follows. Specifically dimethylates two adjacent adenosines (A1518 and A1519) in the loop of a conserved hairpin near the 3'-end of 16S rRNA in the 30S particle. May play a critical role in biogenesis of 30S subunits. The protein is Ribosomal RNA small subunit methyltransferase A of Mycoplasmopsis synoviae (strain 53) (Mycoplasma synoviae).